The chain runs to 75 residues: Porwaprin-d (75 aa).

The first 24 residues, 1 to 24 (MSSGGLLLLLGLLTLWAELTPVSS), serve as a signal peptide directing secretion. Residues 27–72 (RPKKPGLCPPRPQKPPCVRECKNDWRCPGEQKCCRYGCIYECRDPI) form the WAP domain. 4 cysteine pairs are disulfide-bonded: Cys34–Cys60, Cys43–Cys64, Cys47–Cys59, and Cys53–Cys68.

The protein belongs to the venom waprin family. In terms of tissue distribution, expressed by the venom gland.

Its subcellular location is the secreted. In terms of biological role, damages membranes of susceptible bacteria. Has no hemolytic activity. Not toxic to mice. Does not inhibit the proteinases elastase and cathepsin G. This chain is Porwaprin-d, found in Pseudechis porphyriacus (Red-bellied black snake).